The chain runs to 474 residues: Serine/threonine-protein kinase VRK3 (474 aa).

Over residues His41–Thr58 the composition is skewed to polar residues. The tract at residues His41–Leu152 is disordered. Positions Lys49–Lys64 match the Nuclear localization signal motif. 6 positions are modified to phosphoserine: Ser54, Ser55, Ser59, Ser82, Ser83, and Ser90. The span at Thr88–Arg101 shows a compositional bias: low complexity. Polar residues predominate over residues Ser107–Leu149. A Phosphoserine; by CDK5 modification is found at Ser108. Residues Ser115 and Ser122 each carry the phosphoserine modification. Residues Trp166–Leu457 form the Protein kinase domain.

Belongs to the protein kinase superfamily. CK1 Ser/Thr protein kinase family. VRK subfamily. Interacts with DUSP3. Interacts with RAN. Interacts with HSP70/HSPA1A. Post-translationally, phosphorylated at Ser-108 by CDK5; leading to protection of the cell against H2O2-induced apoptosis. In terms of processing, ubiquitinated by RNF144A.

It localises to the nucleus. The protein localises to the cytoplasm. The enzyme catalyses L-seryl-[protein] + ATP = O-phospho-L-seryl-[protein] + ADP + H(+). Functionally, plays a role in the regulation of the cell cycle by phosphorylating the nuclear envelope protein barrier-to-autointegration factor/BAF that is required for disassembly and reassembly, respectively, of the nuclear envelope during mitosis. Under normal physiological conditions, negatively regulates ERK activity along with VHR/DUSP3 phosphatase in the nucleus, causing timely and transient action of ERK. Stress conditions activate CDK5 which phosphorylates VRK3 to increase VHR phosphatase activity and suppress prolonged ERK activation that causes cell death. For example, upon glutamate induction, promotes nuclear localization of HSP70/HSPA1A to inhibit ERK activation via VHR/DUSP3 phosphatase. The sequence is that of Serine/threonine-protein kinase VRK3 (VRK3) from Homo sapiens (Human).